A 351-amino-acid polypeptide reads, in one-letter code: Protein pelota homolog (351 aa).

Belongs to the eukaryotic release factor 1 family. Pelota subfamily. As to quaternary structure, monomer. A divalent metal cation is required as a cofactor.

It localises to the cytoplasm. Functionally, may function in recognizing stalled ribosomes, interact with stem-loop structures in stalled mRNA molecules, and effect endonucleolytic cleavage of the mRNA. May play a role in the release non-functional ribosomes and degradation of damaged mRNAs. Has endoribonuclease activity. The chain is Protein pelota homolog from Methanosphaera stadtmanae (strain ATCC 43021 / DSM 3091 / JCM 11832 / MCB-3).